The sequence spans 148 residues: Ribonuclease H (148 aa).

In terms of domain architecture, RNase H type-1 spans methionine 1–lysine 141. Aspartate 9, glutamate 47, aspartate 69, and aspartate 133 together coordinate Mg(2+).

The protein belongs to the RNase H family. Monomer. Mg(2+) serves as cofactor.

The protein resides in the cytoplasm. The catalysed reaction is Endonucleolytic cleavage to 5'-phosphomonoester.. Functionally, endonuclease that specifically degrades the RNA of RNA-DNA hybrids. This chain is Ribonuclease H, found in Hahella chejuensis (strain KCTC 2396).